The primary structure comprises 309 residues: Fructosamine-3-kinase (309 aa).

M1 is subject to N-acetylmethionine. 89 to 91 (EHL) serves as a coordination point for ATP. The active-site Proton acceptor is D217.

This sequence belongs to the fructosamine kinase family. Monomer. In terms of tissue distribution, widely expressed. Expressed in erythrocytes.

The catalysed reaction is N(6)-(D-fructosyl)-L-lysyl-[protein] + ATP = N(6)-(3-O-phospho-D-fructosyl)-L-lysyl-[protein] + ADP + H(+). It carries out the reaction N(6)-D-ribulosyl-L-lysyl-[protein] + ATP = N(6)-(3-O-phospho-D-ribulosyl)-L-lysyl-[protein] + ADP + H(+). The enzyme catalyses N(6)-(D-psicosyl)-L-lysyl-[protein] + ATP = N(6)-(3-O-phospho-D-psicosyl)-L-lysyl-[protein] + ADP + H(+). Fructosamine-3-kinase involved in protein deglycation by mediating phosphorylation of fructoselysine residues on glycated proteins, to generate fructoselysine-3 phosphate. Fructoselysine-3 phosphate adducts are unstable and decompose under physiological conditions. Involved in intracellular deglycation in erythrocytes. Involved in the response to oxidative stress by mediating deglycation of NFE2L2/NRF2, glycation impairing NFE2L2/NRF2 function. Also able to phosphorylate psicosamines and ribulosamines. The chain is Fructosamine-3-kinase from Homo sapiens (Human).